The chain runs to 126 residues: RuBisCO chaperone RbcX (126 aa).

Belongs to the RbcX family. As to quaternary structure, homodimer. Interacts with the exposed C-terminal peptide of RbcL via its central cleft, contacts a second RbcL monomer via its peripheral polar surface.

The protein localises to the carboxysome. It is found in the cytoplasm. An RbcL-specific chaperone. Required for assembly of the RbcL8 core. The central cleft of the RbcX homodimer (RbcX2) binds the C-terminus of a RbcL monomer, stabilizing the C-terminus and probably preventing its reassociation with chaperonin GroEL-ES. At the same time the peripheral region of RbcX2 binds a second RbcL monomer, bridging the RbcL homodimers in the correct orientation. The RbcX2(2)-bound RbcL dimers then assemble into the RbcL8 core (RbcL8-(RbcX2)8). RbcS binding triggers the release of RbcX2. This Thermosynechococcus vestitus (strain NIES-2133 / IAM M-273 / BP-1) protein is RuBisCO chaperone RbcX.